We begin with the raw amino-acid sequence, 179 residues long: Putative ADP-ribosylation factor-like protein 5C (179 aa).

A lipid anchor (N-myristoyl glycine) is attached at glycine 2. GTP is bound by residues 23-30 (GLDNEGKT), 66-70 (DIVRP), and 125-128 (NKQD).

Belongs to the small GTPase superfamily. Arf family.

Functionally, binds and exchanges GTP and GDP. The sequence is that of Putative ADP-ribosylation factor-like protein 5C (ARL5C) from Homo sapiens (Human).